The sequence spans 769 residues: Polymeric immunoglobulin receptor (769 aa).

An N-terminal signal peptide occupies residues 1–18 (MRLSLFALLVTVFSGVST). Topologically, residues 19-643 (QSPIFGPQDV…SAGGQSGSSK (625 aa)) are extracellular. The Ig-like V-type 1; required for binding to polymeric IgA and IgM domain maps to 21–126 (PIFGPQDVSS…RGLFFDVSLE (106 aa)). An intrachain disulfide couples Cys40 to Cys110. N-linked (GlcNAc...) asparagine glycans are attached at residues Asn90, Asn135, and Asn206. 4 consecutive Ig-like V-type domains span residues 135–237 (NDTH…DLQV), 240–341 (PEPE…VQAW), 353–457 (NSRS…LQVA), and 463–563 (PDLE…IYVA). Cystine bridges form between Cys152–Cys220, Cys257–Cys324, and Cys370–Cys440. N-linked (GlcNAc...) asparagine glycosylation occurs at Asn471. A disulfide bridge connects residues Cys484 and Cys546. 2 disordered regions span residues 569–604 (RGSPHINPTDANARAKDAPEEEAMESSVREDENKAN) and 619–640 (AGDQAQENRASGNAGSAGGQSG). Residues 595-604 (SVREDENKAN) show a composition bias toward basic and acidic residues. Residues 644–666 (VLFSTLVPLGLVLAVGAVAVWVA) traverse the membrane as a helical segment. Residues 667 to 769 (RVRHRKNVDR…AQVHDGPQEA (103 aa)) are Cytoplasmic-facing. 4 positions are modified to phosphoserine: Ser678, Ser687, Ser694, and Ser740. Residues 719–741 (EIETTTECTTEPEESKKAKRSSK) are disordered. Positions 731 to 741 (EESKKAKRSSK) are enriched in basic and acidic residues.

Interacts (mainly via CDR1-like domain) with dimeric IgA. Interacts (mainly via CDR2-like domain) with pentameric IgM. As to quaternary structure, either free or part of the secretory IgA (sIgA) complex that consists of two, four or five IgA monomers, and two additional non-Ig polypeptides, namely the JCHAIN and the secretory component (the proteolytic product of PIGR). Free secretory component interacts with bacterial antigens toxA of C.difficile and eae of E.coli. Post-translationally, N-glycosylated. N-glycosylation is required for anchoring IgA molecules to mucus, but is not necessary for Ig binding.

The protein resides in the cell membrane. Its subcellular location is the secreted. Its function is as follows. Mediates selective transcytosis of polymeric IgA and IgM across mucosal epithelial cells. Binds polymeric IgA and IgM at the basolateral surface of epithelial cells. The complex is then transported across the cell to be secreted at the apical surface. During this process, a cleavage occurs that separates the extracellular (known as the secretory component) from the transmembrane segment. Through its N-linked glycans ensures anchoring of secretory IgA (sIgA) molecules to mucus lining the epithelial surface to neutralize extracellular pathogens. On its own (free form) may act as a non-specific microbial scavenger to prevent pathogen interaction with epithelial cells. In Rattus norvegicus (Rat), this protein is Polymeric immunoglobulin receptor (Pigr).